The following is a 226-amino-acid chain: uncharacterized protein (226 aa).

The protein belongs to the SSM1 family.

This is an uncharacterized protein from Schizosaccharomyces pombe (strain 972 / ATCC 24843) (Fission yeast).